The primary structure comprises 92 residues: Phosphoribosyl-ATP pyrophosphatase (92 aa).

Belongs to the PRA-PH family.

The protein resides in the cytoplasm. It catalyses the reaction 1-(5-phospho-beta-D-ribosyl)-ATP + H2O = 1-(5-phospho-beta-D-ribosyl)-5'-AMP + diphosphate + H(+). It participates in amino-acid biosynthesis; L-histidine biosynthesis; L-histidine from 5-phospho-alpha-D-ribose 1-diphosphate: step 2/9. The sequence is that of Phosphoribosyl-ATP pyrophosphatase from Leptospira borgpetersenii serovar Hardjo-bovis (strain JB197).